Consider the following 136-residue polypeptide: Galectin-7 (136 aa).

A Galectin domain is found at 6-136 (HKTSLPQGVR…DVQLHSLNIF (131 aa)). 70-76 (WGREERG) is an a beta-D-galactoside binding site.

Monomer.

It localises to the cytoplasm. It is found in the nucleus. Its subcellular location is the secreted. In terms of biological role, could be involved in cell-cell and/or cell-matrix interactions necessary for normal growth control. Pro-apoptotic protein that functions intracellularly upstream of JNK activation and cytochrome c release. This Mus musculus (Mouse) protein is Galectin-7 (Lgals7).